We begin with the raw amino-acid sequence, 146 residues long: Lipoprotein signal peptidase (146 aa).

The next 3 membrane-spanning stretches (helical) occupy residues 6–26 (IFLL…TLFL), 50–70 (MFAF…GGIL), and 82–104 (YAFP…FVHA). Catalysis depends on residues aspartate 108 and aspartate 125. Residues 123-143 (FADVAIDLAVAWILIMVYFFP) traverse the membrane as a helical segment.

It belongs to the peptidase A8 family.

It localises to the cell inner membrane. The enzyme catalyses Release of signal peptides from bacterial membrane prolipoproteins. Hydrolyzes -Xaa-Yaa-Zaa-|-(S,diacylglyceryl)Cys-, in which Xaa is hydrophobic (preferably Leu), and Yaa (Ala or Ser) and Zaa (Gly or Ala) have small, neutral side chains.. It participates in protein modification; lipoprotein biosynthesis (signal peptide cleavage). This protein specifically catalyzes the removal of signal peptides from prolipoproteins. The sequence is that of Lipoprotein signal peptidase from Sulfurovum sp. (strain NBC37-1).